We begin with the raw amino-acid sequence, 662 residues long: Chromosomal replication initiator protein DnaA (662 aa).

The interval 1 to 93 (MDDEQNVLAT…QVEGLGVRIA (93 aa)) is domain I, interacts with DnaA modulators. The tract at residues 93–322 (AAPATPTAER…STPAPANSSA (230 aa)) is domain II. Residues 96–105 (ATPTAERAAA) are compositionally biased toward low complexity. The tract at residues 96–294 (ATPTAERAAA…SDGPVERDDE (199 aa)) is disordered. Positions 114 to 123 (SRPERPRGER) are enriched in basic and acidic residues. A compositionally biased stretch (low complexity) spans 166 to 199 (PPAAEYTPAAEYTPAAEYTPAAEYSPEPEYTPAT). 2 stretches are compositionally biased toward basic and acidic residues: residues 236–248 (TPRR…RRDA) and 261–290 (PGDR…GPVE). The tract at residues 323–539 (SLNAKYTFET…GALIRVTAFA (217 aa)) is domain III, AAA+ region. Residues Gly-367, Gly-369, Lys-370, and Thr-371 each contribute to the ATP site. The interval 540 to 662 (SLNGQPLDLS…LTARIKQRSR (123 aa)) is domain IV, binds dsDNA.

This sequence belongs to the DnaA family. Oligomerizes as a right-handed, spiral filament on DNA at oriC.

Its subcellular location is the cytoplasm. Its function is as follows. Plays an essential role in the initiation and regulation of chromosomal replication. ATP-DnaA binds to the origin of replication (oriC) to initiate formation of the DNA replication initiation complex once per cell cycle. Binds the DnaA box (a 9 base pair repeat at the origin) and separates the double-stranded (ds)DNA. Forms a right-handed helical filament on oriC DNA; dsDNA binds to the exterior of the filament while single-stranded (ss)DNA is stabiized in the filament's interior. The ATP-DnaA-oriC complex binds and stabilizes one strand of the AT-rich DNA unwinding element (DUE), permitting loading of DNA polymerase. After initiation quickly degrades to an ADP-DnaA complex that is not apt for DNA replication. Binds acidic phospholipids. The protein is Chromosomal replication initiator protein DnaA of Nocardia farcinica (strain IFM 10152).